Here is a 1399-residue protein sequence, read N- to C-terminus: DNA-directed RNA polymerase subunit beta' (1399 aa).

C70, C72, C85, and C88 together coordinate Zn(2+). Mg(2+) contacts are provided by D460, D462, and D464. Zn(2+) is bound by residues C814, C888, C895, and C898.

This sequence belongs to the RNA polymerase beta' chain family. The RNAP catalytic core consists of 2 alpha, 1 beta, 1 beta' and 1 omega subunit. When a sigma factor is associated with the core the holoenzyme is formed, which can initiate transcription. It depends on Mg(2+) as a cofactor. The cofactor is Zn(2+).

The catalysed reaction is RNA(n) + a ribonucleoside 5'-triphosphate = RNA(n+1) + diphosphate. Its function is as follows. DNA-dependent RNA polymerase catalyzes the transcription of DNA into RNA using the four ribonucleoside triphosphates as substrates. This chain is DNA-directed RNA polymerase subunit beta', found in Pseudomonas entomophila (strain L48).